The following is a 78-amino-acid chain: UPF0291 protein Ldb1355 (78 aa).

Belongs to the UPF0291 family.

It localises to the cytoplasm. The chain is UPF0291 protein Ldb1355 from Lactobacillus delbrueckii subsp. bulgaricus (strain ATCC 11842 / DSM 20081 / BCRC 10696 / JCM 1002 / NBRC 13953 / NCIMB 11778 / NCTC 12712 / WDCM 00102 / Lb 14).